The chain runs to 193 residues: Holliday junction branch migration complex subunit RuvA (193 aa).

Residues 1-64 (MIGRIQGTLV…EDAQQLFGFA (64 aa)) form a domain I region. The domain II stretch occupies residues 65–139 (TEIEREAFRQ…GKLAPDLGIT (75 aa)). The tract at residues 139–143 (TGGKP) is flexible linker. Positions 144-193 (QAIEATSEVLQALLSLGYSEKEALLALKQIPPETSVSDGIRMGLKYLSKP) are domain III.

The protein belongs to the RuvA family. In terms of assembly, homotetramer. Forms an RuvA(8)-RuvB(12)-Holliday junction (HJ) complex. HJ DNA is sandwiched between 2 RuvA tetramers; dsDNA enters through RuvA and exits via RuvB. An RuvB hexamer assembles on each DNA strand where it exits the tetramer. Each RuvB hexamer is contacted by two RuvA subunits (via domain III) on 2 adjacent RuvB subunits; this complex drives branch migration. In the full resolvosome a probable DNA-RuvA(4)-RuvB(12)-RuvC(2) complex forms which resolves the HJ.

Its subcellular location is the cytoplasm. In terms of biological role, the RuvA-RuvB-RuvC complex processes Holliday junction (HJ) DNA during genetic recombination and DNA repair, while the RuvA-RuvB complex plays an important role in the rescue of blocked DNA replication forks via replication fork reversal (RFR). RuvA specifically binds to HJ cruciform DNA, conferring on it an open structure. The RuvB hexamer acts as an ATP-dependent pump, pulling dsDNA into and through the RuvAB complex. HJ branch migration allows RuvC to scan DNA until it finds its consensus sequence, where it cleaves and resolves the cruciform DNA. This is Holliday junction branch migration complex subunit RuvA from Polynucleobacter asymbioticus (strain DSM 18221 / CIP 109841 / QLW-P1DMWA-1) (Polynucleobacter necessarius subsp. asymbioticus).